The chain runs to 260 residues: Type III pantothenate kinase (260 aa).

6 to 13 provides a ligand contact to ATP; the sequence is DSGNTNIV. A substrate-binding site is contributed by 108–111; that stretch reads GADR. D110 serves as the catalytic Proton acceptor. D130 provides a ligand contact to K(+). T133 is an ATP binding site. T185 is a substrate binding site.

The protein belongs to the type III pantothenate kinase family. In terms of assembly, homodimer. It depends on NH4(+) as a cofactor. K(+) is required as a cofactor.

The protein resides in the cytoplasm. It carries out the reaction (R)-pantothenate + ATP = (R)-4'-phosphopantothenate + ADP + H(+). Its pathway is cofactor biosynthesis; coenzyme A biosynthesis; CoA from (R)-pantothenate: step 1/5. Its function is as follows. Catalyzes the phosphorylation of pantothenate (Pan), the first step in CoA biosynthesis. In Paramagnetospirillum magneticum (strain ATCC 700264 / AMB-1) (Magnetospirillum magneticum), this protein is Type III pantothenate kinase.